The sequence spans 132 residues: ER membrane protein complex subunit 5 (132 aa).

At 1 to 3 the chain is on the cytoplasmic side; the sequence is MAS. A helical transmembrane segment spans residues 4 to 22; that stretch reads SIWKGLVGIGLFALAHAAF. The Lumenal segment spans residues 23 to 43; sequence SAAQHRSYMRLTEKEDETLPI. Residues 44-63 form a helical membrane-spanning segment; that stretch reads DIVLQTLLAFIVACYGIVHI. The Cytoplasmic segment spans residues 64-132; the sequence is AGEFKDMDAT…KLSKLESMHR (69 aa).

Belongs to the membrane magnesium transporter (TC 1.A.67) family. In terms of assembly, component of the ER membrane protein complex (EMC).

It is found in the endoplasmic reticulum membrane. The protein resides in the golgi apparatus membrane. It localises to the early endosome membrane. Its function is as follows. Part of the endoplasmic reticulum membrane protein complex (EMC) that enables the energy-independent insertion into endoplasmic reticulum membranes of newly synthesized membrane proteins. Preferentially accommodates proteins with transmembrane domains that are weakly hydrophobic or contain destabilizing features such as charged and aromatic residues. Involved in the cotranslational insertion of multi-pass membrane proteins in which stop-transfer membrane-anchor sequences become ER membrane spanning helices. It is also required for the post-translational insertion of tail-anchored/TA proteins in endoplasmic reticulum membranes. By mediating the proper cotranslational insertion of N-terminal transmembrane domains in an N-exo topology, with translocated N-terminus in the lumen of the ER, controls the topology of multi-pass membrane proteins like the G protein-coupled receptors. By regulating the insertion of various proteins in membranes, it is indirectly involved in many cellular processes. May be involved in Mg(2+) transport. The sequence is that of ER membrane protein complex subunit 5 from Xenopus tropicalis (Western clawed frog).